The sequence spans 205 residues: MSFRGGNRGGRGGFRGGFRGGRTGSARSFQQGPPDTVLEMGAFLHPCEGDIVCRSINTKIPYFNAPIYLENKTQVGKVDEILGPLNEVFFTIKCGDGVQATSFKEGDKFYIAADKLLPIERFLPKPKVVGPPKPKNKKKRSGAPGGRGGASMGRGGSRGGFRGGRGGSSFRGGRGGSSFRGGSRGGSFRGGSRGGSRGGFRGGRR.

Positions 1-23 (MSFRGGNRGGRGGFRGGFRGGRT) are enriched in gly residues. The disordered stretch occupies residues 1-31 (MSFRGGNRGGRGGFRGGFRGGRTGSARSFQQ). Arginine 4 bears the Asymmetric dimethylarginine; by HMT1 mark. The RGG-box 1 stretch occupies residues 4–21 (RGGNRGGRGGFRGGFRGG). Residue arginine 8 is modified to Asymmetric dimethylarginine; by HMT1; alternate. Position 8 is an omega-N-methylarginine; by HMT1; alternate (arginine 8). An Asymmetric dimethylarginine; by HMT1 modification is found at arginine 11. Position 15 is an asymmetric dimethylarginine; by HMT1; alternate (arginine 15). Arginine 15 carries the post-translational modification Omega-N-methylarginine; by HMT1; alternate. The residue at position 19 (arginine 19) is an Asymmetric dimethylarginine; by HMT1. A Glycyl lysine isopeptide (Lys-Gly) (interchain with G-Cter in ubiquitin) cross-link involves residue lysine 77. The tract at residues 124–205 (PKPKVVGPPK…SRGGFRGGRR (82 aa)) is disordered. Gly residues predominate over residues 143-205 (APGGRGGASM…SRGGFRGGRR (63 aa)). Asymmetric dimethylarginine; by HMT1; alternate is present on residues arginine 147, arginine 154, and arginine 158. Omega-N-methylarginine; by HMT1; alternate is present on residues arginine 147, arginine 154, and arginine 158. The RGG-box 2 stretch occupies residues 147–205 (RGGASMGRGGSRGGFRGGRGGSSFRGGRGGSSFRGGSRGGSFRGGSRGGSRGGFRGGRR). Residue arginine 162 is modified to Asymmetric dimethylarginine; by HMT1. Residue arginine 165 is modified to Asymmetric dimethylarginine; by HMT1; alternate. Omega-N-methylarginine; by HMT1; alternate is present on arginine 165. 2 positions are modified to asymmetric dimethylarginine; by HMT1: arginine 171 and arginine 174. Omega-N-methylarginine; by HMT1 is present on residues arginine 180 and arginine 184. Asymmetric dimethylarginine; by HMT1; alternate is present on arginine 189. Arginine 189 bears the Omega-N-methylarginine; by HMT1; alternate mark. Arginine 193, arginine 197, and arginine 201 each carry asymmetric dimethylarginine; by HMT1.

Belongs to the GAR1 family. Component of the small nucleolar ribonucleoprotein particles containing H/ACA-type snoRNAs (H/ACA snoRNPs). The protein component of the H/ACA snoRNP contains CBF5, GAR1, NHP2 and NOP10. The complex contains a stable core composed of CBF5 and NOP10, to which GAR1 and NHP2 subsequently bind. Interacts with snoRNAs. Post-translationally, methylated by HMT1, forming asymmetric dimethylarginines (DMA) within a domain referred to as an RGG box, made up of repeated Gly-Gly dipeptides interspersed with Arg and aromatic residues.

It is found in the nucleus. It localises to the nucleolus. Its function is as follows. Non-catalytic component of the H/ACA small nucleolar ribonucleoprotein (H/ACA snoRNP), which catalyzes pseudouridylation of rRNA and is required for ribosome biogenesis. This involves the isomerization of uridine such that the ribose is subsequently attached to C5, instead of the normal N1. Pseudouridine ('psi') residues may serve to stabilize the conformation of rRNAs. The H/ACA snoRNP complex also mediates pseudouridylation of other types of RNAs. The H/ACA snoRNP complex mediates pseudouridylation at position 93 in U2 snRNA. Essential for growth. In Saccharomyces cerevisiae (strain ATCC 204508 / S288c) (Baker's yeast), this protein is H/ACA ribonucleoprotein complex subunit GAR1.